Consider the following 179-residue polypeptide: Large ribosomal subunit protein uL5 (179 aa).

The protein belongs to the universal ribosomal protein uL5 family. In terms of assembly, part of the 50S ribosomal subunit; part of the 5S rRNA/L5/L18/L25 subcomplex. Contacts the 5S rRNA and the P site tRNA. Forms a bridge to the 30S subunit in the 70S ribosome.

This is one of the proteins that bind and probably mediate the attachment of the 5S RNA into the large ribosomal subunit, where it forms part of the central protuberance. In the 70S ribosome it contacts protein S13 of the 30S subunit (bridge B1b), connecting the 2 subunits; this bridge is implicated in subunit movement. Contacts the P site tRNA; the 5S rRNA and some of its associated proteins might help stabilize positioning of ribosome-bound tRNAs. The polypeptide is Large ribosomal subunit protein uL5 (Methylococcus capsulatus (strain ATCC 33009 / NCIMB 11132 / Bath)).